We begin with the raw amino-acid sequence, 110 residues long: U-scoloptoxin(16)-Er6a (110 aa).

The N-terminal stretch at 1 to 26 is a signal peptide; it reads MTSTRKLSVSCLIVFMVSSLIAVSSG.

This sequence belongs to the scoloptoxin-16 family. In terms of processing, contains 4 disulfide bonds. Expressed by the venom gland.

The protein resides in the secreted. In Ethmostigmus rubripes (Giant centipede), this protein is U-scoloptoxin(16)-Er6a.